A 152-amino-acid chain; its full sequence is SsrA-binding protein (152 aa).

The protein belongs to the SmpB family.

It localises to the cytoplasm. Its function is as follows. Required for rescue of stalled ribosomes mediated by trans-translation. Binds to transfer-messenger RNA (tmRNA), required for stable association of tmRNA with ribosomes. tmRNA and SmpB together mimic tRNA shape, replacing the anticodon stem-loop with SmpB. tmRNA is encoded by the ssrA gene; the 2 termini fold to resemble tRNA(Ala) and it encodes a 'tag peptide', a short internal open reading frame. During trans-translation Ala-aminoacylated tmRNA acts like a tRNA, entering the A-site of stalled ribosomes, displacing the stalled mRNA. The ribosome then switches to translate the ORF on the tmRNA; the nascent peptide is terminated with the 'tag peptide' encoded by the tmRNA and targeted for degradation. The ribosome is freed to recommence translation, which seems to be the essential function of trans-translation. The sequence is that of SsrA-binding protein from Rickettsia massiliae (strain Mtu5).